A 526-amino-acid polypeptide reads, in one-letter code: Lysine--tRNA ligase (526 aa).

The 'HIGH' region signature appears at 30–38 (PSGYVHIGN). The Zn(2+) site is built by aspartate 95, cysteine 99, histidine 100, histidine 106, cysteine 177, and cysteine 199. A 'KMSKS' region motif is present at residues 280–284 (KMSGS).

Belongs to the class-I aminoacyl-tRNA synthetase family. Zn(2+) is required as a cofactor.

It localises to the cytoplasm. It catalyses the reaction tRNA(Lys) + L-lysine + ATP = L-lysyl-tRNA(Lys) + AMP + diphosphate. This Thermococcus kodakarensis (strain ATCC BAA-918 / JCM 12380 / KOD1) (Pyrococcus kodakaraensis (strain KOD1)) protein is Lysine--tRNA ligase (lysS).